Here is a 496-residue protein sequence, read N- to C-terminus: Ribose import ATP-binding protein RbsA (496 aa).

2 ABC transporter domains span residues 5-242 (IEMK…VGRS) and 252-496 (SQIG…TGGE). 37-44 (GENGAGKS) provides a ligand contact to ATP.

The protein belongs to the ABC transporter superfamily. Ribose importer (TC 3.A.1.2.1) family. The complex is composed of an ATP-binding protein (RbsA), two transmembrane proteins (RbsC) and a solute-binding protein (RbsB).

The protein localises to the cell membrane. It catalyses the reaction D-ribose(out) + ATP + H2O = D-ribose(in) + ADP + phosphate + H(+). Functionally, part of the ABC transporter complex RbsABC involved in ribose import. Responsible for energy coupling to the transport system. This Bacillus cereus (strain ATCC 14579 / DSM 31 / CCUG 7414 / JCM 2152 / NBRC 15305 / NCIMB 9373 / NCTC 2599 / NRRL B-3711) protein is Ribose import ATP-binding protein RbsA.